We begin with the raw amino-acid sequence, 89 residues long: MKKLVLKSIDFYRKHISPATPPKCIYLPTCSSYTYEAVEKFGVFKGLYLGFRRFIRCNPLHKGGYDPVPEKFSFFVHKQGKNKQHRRSV.

The protein belongs to the UPF0161 family.

It localises to the cell inner membrane. Could be involved in insertion of integral membrane proteins into the membrane. In Petrotoga mobilis (strain DSM 10674 / SJ95), this protein is Putative membrane protein insertion efficiency factor.